Here is an 827-residue protein sequence, read N- to C-terminus: Periplasmic nitrate reductase (827 aa).

Residues 1 to 32 constitute a signal peptide (tat-type signal); sequence MELSRRDFMKANAAVAAAAAAGIVLPVKNVQA. The 4Fe-4S Mo/W bis-MGD-type domain maps to 37–93; sequence IKWDKAPCRFCGTGCSVLVGTKDGRVVATQGDPDAEVNRGLNCIKGYFLSKIMYGAD. 4 residues coordinate [4Fe-4S] cluster: Cys-44, Cys-47, Cys-51, and Cys-79. Residues Lys-81, Gln-148, Asn-173, Cys-177, 210–217, 241–245, Met-371, Gln-375, Asn-481, 507–508, Lys-530, Asp-557, and 717–726 each bind Mo-bis(molybdopterin guanine dinucleotide); these read WGSNMAEM, STFEH, SD, and TGRVLEHWHT. Phe-793 lines the substrate pocket. Positions 801 and 818 each coordinate Mo-bis(molybdopterin guanine dinucleotide).

It belongs to the prokaryotic molybdopterin-containing oxidoreductase family. NasA/NapA/NarB subfamily. In terms of assembly, component of the periplasmic nitrate reductase NapAB complex composed of NapA and NapB. Requires [4Fe-4S] cluster as cofactor. It depends on Mo-bis(molybdopterin guanine dinucleotide) as a cofactor. In terms of processing, predicted to be exported by the Tat system. The position of the signal peptide cleavage has not been experimentally proven.

It is found in the periplasm. The catalysed reaction is 2 Fe(II)-[cytochrome] + nitrate + 2 H(+) = 2 Fe(III)-[cytochrome] + nitrite + H2O. In terms of biological role, catalytic subunit of the periplasmic nitrate reductase complex NapAB. Receives electrons from NapB and catalyzes the reduction of nitrate to nitrite. This Haemophilus ducreyi (strain 35000HP / ATCC 700724) protein is Periplasmic nitrate reductase.